The sequence spans 64 residues: MILYLLFAFLFLAFLSEPGNAYKQCHKKGGHCFPKEKICIPPSSDFGKMDCRWRWKCCKKGSGK.

Residues 1 to 22 (MILYLLFAFLFLAFLSEPGNAY) form the signal peptide. Disulfide bonds link Cys25/Cys57, Cys32/Cys51, and Cys39/Cys58.

It belongs to the crotamine-myotoxin family. Monomer. As to expression, expressed by the venom gland.

It is found in the secreted. Its function is as follows. Cationic peptide that possesses multiple functions. It acts as a cell-penetrating peptide (CPP), and as a potent voltage-gated potassium channel (Kv) inhibitor. It exhibits antimicrobial activities, hind limb paralysis, and severe muscle necrosis by a non-enzymatic mechanism. In Crotalus durissus terrificus (South American rattlesnake), this protein is Crotamine CRO3 (CRO3).